The primary structure comprises 416 residues: Probable glucan 1,3-beta-glucosidase A (416 aa).

The N-terminal stretch at 1–22 (MIFKFSQKALVALCLVVGLAEA) is a signal peptide. Residue Glu211 is the Proton donor of the active site. 2 disulfides stabilise this stretch: Cys291/Cys415 and Cys316/Cys342. Glu308 functions as the Nucleophile in the catalytic mechanism.

It belongs to the glycosyl hydrolase 5 (cellulase A) family. In terms of assembly, monomer. Mn(2+) serves as cofactor.

Its subcellular location is the secreted. The catalysed reaction is Successive hydrolysis of beta-D-glucose units from the non-reducing ends of (1-&gt;3)-beta-D-glucans, releasing alpha-glucose.. In terms of biological role, beta-glucanases participate in the metabolism of beta-glucan, the main structural component of the cell wall. It could also function biosynthetically as a transglycosylase. The chain is Probable glucan 1,3-beta-glucosidase A (exgA) from Neosartorya fischeri (strain ATCC 1020 / DSM 3700 / CBS 544.65 / FGSC A1164 / JCM 1740 / NRRL 181 / WB 181) (Aspergillus fischerianus).